Here is a 213-residue protein sequence, read N- to C-terminus: MTTTTPDLTIVRAGTLGYEAAWEEQRRLHESVVADERGDAVLLLEHPSVYTAGKRTEPWDRPMDGTPVIDVDRGGKITWHGPGQLVGYPILRLPNPVDVVAYVRRVEQMLIDVCAEFGLVAGRIEGRSGVWVPADDRGPARKVAAIGIRVARGVTLHGFSLNCDCDLTYYDRIVPCGISDAGVTSLAAELGRPVTVADALPVVERHLPTLIEP.

The region spanning D35 to P213 is the BPL/LPL catalytic domain. Residues R73 to H80, A145 to G147, and G158 to S160 contribute to the substrate site. C176 (acyl-thioester intermediate) is an active-site residue.

The protein belongs to the LipB family.

It localises to the cytoplasm. It carries out the reaction octanoyl-[ACP] + L-lysyl-[protein] = N(6)-octanoyl-L-lysyl-[protein] + holo-[ACP] + H(+). Its pathway is protein modification; protein lipoylation via endogenous pathway; protein N(6)-(lipoyl)lysine from octanoyl-[acyl-carrier-protein]: step 1/2. Catalyzes the transfer of endogenously produced octanoic acid from octanoyl-acyl-carrier-protein onto the lipoyl domains of lipoate-dependent enzymes. Lipoyl-ACP can also act as a substrate although octanoyl-ACP is likely to be the physiological substrate. The polypeptide is Octanoyltransferase (Salinispora tropica (strain ATCC BAA-916 / DSM 44818 / JCM 13857 / NBRC 105044 / CNB-440)).